The chain runs to 167 residues: 6,7-dimethyl-8-ribityllumazine synthase (167 aa).

5-amino-6-(D-ribitylamino)uracil-binding positions include F26, 60 to 62 (AFE), and 89 to 91 (AVI). Position 94–95 (94–95 (ET)) interacts with (2S)-2-hydroxy-3-oxobutyl phosphate. H97 (proton donor) is an active-site residue. Residue F122 participates in 5-amino-6-(D-ribitylamino)uracil binding. R136 serves as a coordination point for (2S)-2-hydroxy-3-oxobutyl phosphate.

It belongs to the DMRL synthase family. Forms an icosahedral capsid composed of 60 subunits, arranged as a dodecamer of pentamers.

The enzyme catalyses (2S)-2-hydroxy-3-oxobutyl phosphate + 5-amino-6-(D-ribitylamino)uracil = 6,7-dimethyl-8-(1-D-ribityl)lumazine + phosphate + 2 H2O + H(+). It participates in cofactor biosynthesis; riboflavin biosynthesis; riboflavin from 2-hydroxy-3-oxobutyl phosphate and 5-amino-6-(D-ribitylamino)uracil: step 1/2. Its function is as follows. Catalyzes the formation of 6,7-dimethyl-8-ribityllumazine by condensation of 5-amino-6-(D-ribitylamino)uracil with 3,4-dihydroxy-2-butanone 4-phosphate. This is the penultimate step in the biosynthesis of riboflavin. The sequence is that of 6,7-dimethyl-8-ribityllumazine synthase from Vesicomyosocius okutanii subsp. Calyptogena okutanii (strain HA).